We begin with the raw amino-acid sequence, 250 residues long: DNA repair protein RecO (250 aa).

It belongs to the RecO family.

Involved in DNA repair and RecF pathway recombination. This chain is DNA repair protein RecO, found in Rhodopseudomonas palustris (strain TIE-1).